A 327-amino-acid chain; its full sequence is tRNA-dihydrouridine(20/20a) synthase (327 aa).

FMN contacts are provided by residues 17-19 (PML) and glutamine 69. The active-site Proton donor is the cysteine 99. Residues lysine 138, histidine 170, 210-212 (NGG), and 232-233 (GR) each bind FMN.

This sequence belongs to the Dus family. DusA subfamily. FMN is required as a cofactor.

It catalyses the reaction 5,6-dihydrouridine(20) in tRNA + NADP(+) = uridine(20) in tRNA + NADPH + H(+). The enzyme catalyses 5,6-dihydrouridine(20) in tRNA + NAD(+) = uridine(20) in tRNA + NADH + H(+). The catalysed reaction is 5,6-dihydrouridine(20a) in tRNA + NADP(+) = uridine(20a) in tRNA + NADPH + H(+). It carries out the reaction 5,6-dihydrouridine(20a) in tRNA + NAD(+) = uridine(20a) in tRNA + NADH + H(+). Functionally, catalyzes the synthesis of 5,6-dihydrouridine (D), a modified base found in the D-loop of most tRNAs, via the reduction of the C5-C6 double bond in target uridines. Specifically modifies U20 and U20a in tRNAs. In Pasteurella multocida (strain Pm70), this protein is tRNA-dihydrouridine(20/20a) synthase.